We begin with the raw amino-acid sequence, 355 residues long: MESIFHEKQEGSLCAQHCLNNLLQGEYFSPVELSSIAHQLDEEERLRMAEGGVTSEDYRTFLQQPSGNMDDSGFFSIQVISNALKVWGLELILFNSPEYQRLRIDPINERSFICNYKEHWFTVRKLGKQWFNLNSLLTGPELISDTYLALFLAQLQQEGYSIFVVKGDLPDCEADQLLQMIKVQQMHRPKLIGEELAHLKEQSALKADLERVLEAADGSGIFDEDEDDLQRALAISRQEIDMEDEEADLRRAIQLSMQGSSRSMCENSPQTSSPDLSSEELRRRREAYFEKQQQQQQEVDRPGPLSYPRERPTTSSGGRRSDQGGDAVSEEDMLRAAVTMSLETAKDNLKAERKK.

Methionine 1 is covalently cross-linked (Peptide (Met-Gly) (interchain with G-Cter in ubiquitin)). The region spanning methionine 1–methionine 180 is the Josephin domain. Residue cysteine 14 is the Nucleophile of the active site. Catalysis depends on histidine 119, which acts as the Proton acceptor. Asparagine 134 is an active-site residue. Lysine 200 is covalently cross-linked (Glycyl lysine isopeptide (Lys-Gly) (interchain with G-Cter in ubiquitin)). Serine 219 carries the post-translational modification Phosphoserine. UIM domains lie at glutamate 224 to glutamate 243 and aspartate 244 to serine 263. The span at methionine 257–aspartate 275 shows a compositional bias: polar residues. The tract at residues methionine 257 to lysine 355 is disordered. Residues serine 268, serine 272, and serine 273 each carry the phosphoserine modification. Over residues glutamate 279–phenylalanine 289 the composition is skewed to basic and acidic residues. A Phosphoserine modification is found at serine 321. Positions serine 329–asparagine 348 constitute a UIM 3 domain. Positions threonine 344–lysine 355 are enriched in basic and acidic residues.

In terms of assembly, interacts with STUB1/CHIP (when monoubiquitinated). Interacts with DNA repair proteins RAD23A and RAD23B. Interacts with BECN1 (via its poly-Gln domain). Interacts with PRKN, UBR2, VCP and tubulin. In terms of processing, monoubiquitinated by UBE2W, possibly leading to activate the deubiquitinating enzyme activity.

It localises to the nucleus matrix. The protein resides in the nucleus. It is found in the lysosome membrane. The catalysed reaction is Thiol-dependent hydrolysis of ester, thioester, amide, peptide and isopeptide bonds formed by the C-terminal Gly of ubiquitin (a 76-residue protein attached to proteins as an intracellular targeting signal).. In terms of biological role, deubiquitinating enzyme involved in protein homeostasis maintenance, transcription, cytoskeleton regulation, myogenesis and degradation of misfolded chaperone substrates. Binds long polyubiquitin chains and trims them, while it has weak or no activity against chains of 4 or less ubiquitins. Involved in degradation of misfolded chaperone substrates via its interaction with STUB1/CHIP: recruited to monoubiquitinated STUB1/CHIP, and restricts the length of ubiquitin chain attached to STUB1/CHIP substrates and preventing further chain extension. Interacts with key regulators of transcription and represses transcription: acts as a histone-binding protein that regulates transcription. Acts as a negative regulator of mTORC1 signaling in response to amino acid deprivation by mediating deubiquitination of RHEB, thereby promoting RHEB inactivation by the TSC-TBC complex. Regulates autophagy via the deubiquitination of 'Lys-402' of BECN1 leading to the stabilization of BECN1. The polypeptide is Ataxin-3 (Atxn3) (Mus musculus (Mouse)).